We begin with the raw amino-acid sequence, 126 residues long: B3 domain-containing protein At5g54067 (126 aa).

A DNA-binding region (TF-B3) is located at residues 20-118; sequence SDIVGNVVLP…KFVVLNFQYS (99 aa).

The protein resides in the nucleus. This Arabidopsis thaliana (Mouse-ear cress) protein is B3 domain-containing protein At5g54067.